Consider the following 396-residue polypeptide: Na(+)/H(+) antiporter NhaA (396 aa).

11 helical membrane-spanning segments follow: residues 16–36 (GIIL…GLAG), 59–79 (LLLW…GLEV), 95–115 (TFPA…YAFF), 124–144 (AGWA…MALL), 154–174 (VFLL…IALF), 178–198 (QLSL…LWMN), 213–233 (LVLW…GVIV), 254–274 (ALHP…NAGV), 278–298 (GIGL…GLFI), 328–348 (IFAV…IASL), and 363–383 (LGIL…LRIA).

This sequence belongs to the NhaA Na(+)/H(+) (TC 2.A.33) antiporter family.

Its subcellular location is the cell inner membrane. The catalysed reaction is Na(+)(in) + 2 H(+)(out) = Na(+)(out) + 2 H(+)(in). Its function is as follows. Na(+)/H(+) antiporter that extrudes sodium in exchange for external protons. The protein is Na(+)/H(+) antiporter NhaA of Aeromonas hydrophila subsp. hydrophila (strain ATCC 7966 / DSM 30187 / BCRC 13018 / CCUG 14551 / JCM 1027 / KCTC 2358 / NCIMB 9240 / NCTC 8049).